A 251-amino-acid chain; its full sequence is 2,3-bisphosphoglycerate-dependent phosphoglycerate mutase (251 aa).

Substrate-binding positions include 13–20, 26–27, Arg65, 92–95, Lys103, 119–120, and 186–187; these read RHGESEWN, TG, ERHY, RR, and GN. His14 functions as the Tele-phosphohistidine intermediate in the catalytic mechanism. The active-site Proton donor/acceptor is Glu92.

It belongs to the phosphoglycerate mutase family. BPG-dependent PGAM subfamily.

It catalyses the reaction (2R)-2-phosphoglycerate = (2R)-3-phosphoglycerate. Its pathway is carbohydrate degradation; glycolysis; pyruvate from D-glyceraldehyde 3-phosphate: step 3/5. Functionally, catalyzes the interconversion of 2-phosphoglycerate and 3-phosphoglycerate. The sequence is that of 2,3-bisphosphoglycerate-dependent phosphoglycerate mutase from Rhodococcus opacus (strain B4).